Consider the following 152-residue polypeptide: 3-dehydroquinate dehydratase (152 aa).

The active-site Proton acceptor is tyrosine 26. Residues asparagine 77, histidine 83, and aspartate 90 each coordinate substrate. Histidine 103 acts as the Proton donor in catalysis. Residues 104–105 (LS) and arginine 114 each bind substrate.

It belongs to the type-II 3-dehydroquinase family. As to quaternary structure, homododecamer.

It carries out the reaction 3-dehydroquinate = 3-dehydroshikimate + H2O. It participates in metabolic intermediate biosynthesis; chorismate biosynthesis; chorismate from D-erythrose 4-phosphate and phosphoenolpyruvate: step 3/7. Its function is as follows. Catalyzes a trans-dehydration via an enolate intermediate. The sequence is that of 3-dehydroquinate dehydratase (aroQ) from Synechocystis sp. (strain ATCC 27184 / PCC 6803 / Kazusa).